Here is a 184-residue protein sequence, read N- to C-terminus: uncharacterized protein (184 aa).

The chain crosses the membrane as a helical span at residues 35–55; that stretch reads LSFLIYILYTFSISGLSTFVI.

It is found in the membrane. This is an uncharacterized protein from Schizosaccharomyces pombe (strain 972 / ATCC 24843) (Fission yeast).